A 360-amino-acid chain; its full sequence is MEKYEAVRDIGSGNFGVARLMRNRETRELVAVKCIERGHRIDENVYREIINHRSLRHPNIIRFKEVILTPTHLMIVMEFAAGGELFDRICDRGRFSEDEARYFFQQLICGVSYCHHMQICHRDLKLENVLLDGSPAPRLKICDFGYSKSSVLHSRPKSAVGTPAYIAPEVLSRREYDGKLADVWSCGVTLYVMLVGAYPFEDQDDPKNIRKTIQRIMSVQYKIPDYVHISAECKQLIARIFVNNPLRRITMKEIKSHPWFLKNLPRELTETAQAMYYRRDNSVPSFSDQTSEEIMKIVQEARTMPKSSRTGYWSDAGSDEEEKEEEERPEENEEEEEDEYDKRVKEVHASGELRMSSLRI.

In terms of domain architecture, Protein kinase spans 4–260 (YEAVRDIGSG…MKEIKSHPWF (257 aa)). Residues 10–18 (IGSGNFGVA) and lysine 33 contribute to the ATP site. Aspartate 123 serves as the catalytic Proton acceptor. The tract at residues 303-360 (TMPKSSRTGYWSDAGSDEEEKEEEERPEENEEEEEDEYDKRVKEVHASGELRMSSLRI) is disordered. Residues 317–339 (GSDEEEKEEEERPEENEEEEEDE) are compositionally biased toward acidic residues. A compositionally biased stretch (basic and acidic residues) spans 340–351 (YDKRVKEVHASG).

The protein belongs to the protein kinase superfamily. Ser/Thr protein kinase family. In terms of processing, may be phosphorylated. In terms of tissue distribution, expressed in leaf blades, leaf sheaths and roots. Expressed in shoots and roots of young seedlings.

It catalyses the reaction L-seryl-[protein] + ATP = O-phospho-L-seryl-[protein] + ADP + H(+). It carries out the reaction L-threonyl-[protein] + ATP = O-phospho-L-threonyl-[protein] + ADP + H(+). Its activity is regulated as follows. Activated by hyperosmotic stress. May play a role in signal transduction of hyperosmotic response. This chain is Serine/threonine-protein kinase SAPK4 (SAPK4), found in Oryza sativa subsp. japonica (Rice).